The primary structure comprises 510 residues: NAD(P)H-quinone oxidoreductase subunit 2 B, chloroplastic (510 aa).

The next 14 membrane-spanning stretches (helical) occupy residues 24-44, 59-79, 99-119, 124-144, 149-169, 184-204, 229-249, 261-281, 295-315, 323-343, 354-374, 395-415, 418-438, and 484-504; these read LLLF…GLIL, WFYF…LFRW, IFQF…VEYI, MAIT…MFLC, LITI…LSGY, LLMG…LYGL, ISIA…LAPF, PTPV…ALAT, WHLL…LLAI, MLAY…IVGD, YMLF…LFGL, ALSL…AGFF, LYLF…IGLL, and MTVC…ILAI.

It belongs to the complex I subunit 2 family. In terms of assembly, NDH is composed of at least 16 different subunits, 5 of which are encoded in the nucleus.

Its subcellular location is the plastid. The protein resides in the chloroplast thylakoid membrane. The enzyme catalyses a plastoquinone + NADH + (n+1) H(+)(in) = a plastoquinol + NAD(+) + n H(+)(out). The catalysed reaction is a plastoquinone + NADPH + (n+1) H(+)(in) = a plastoquinol + NADP(+) + n H(+)(out). Functionally, NDH shuttles electrons from NAD(P)H:plastoquinone, via FMN and iron-sulfur (Fe-S) centers, to quinones in the photosynthetic chain and possibly in a chloroplast respiratory chain. The immediate electron acceptor for the enzyme in this species is believed to be plastoquinone. Couples the redox reaction to proton translocation, and thus conserves the redox energy in a proton gradient. The chain is NAD(P)H-quinone oxidoreductase subunit 2 B, chloroplastic from Zea mays (Maize).